The chain runs to 153 residues: MAL-like protein (153 aa).

Helical transmembrane passes span 22 to 42 (LFLT…FLVW), 59 to 79 (VMYV…SYLF), 97 to 117 (GTTG…TIVS), and 131 to 151 (AASF…FSIY). The MARVEL domain occupies 22 to 153 (LFLTIPFAFF…ILHAFSIYYH (132 aa)).

Belongs to the MAL family.

The protein resides in the membrane. This chain is MAL-like protein (MALL), found in Homo sapiens (Human).